The sequence spans 548 residues: MFS-type transporter TOXA (548 aa).

The span at 1 to 12 shows a compositional bias: polar residues; the sequence is MDEQIVSASSNV. Positions 1–33 are disordered; the sequence is MDEQIVSASSNVKDGVEKQPVKDREDVDANVVP. The span at 14–27 shows a compositional bias: basic and acidic residues; it reads DGVEKQPVKDREDV. 14 helical membrane passes run 43–63, 85–105, 114–134, 146–166, 177–197, 204–224, 250–270, 280–300, 316–336, 357–377, 382–402, 411–431, 444–464, and 518–538; these read ISLI…FLGA, AVAW…PLFG, KWLF…CALA, VAGI…ALIV, MIGA…GAIA, WCFW…LFFF, IGAG…QWGG, VVAL…HQYW, GFLL…AALY, MLPI…TISF, APFI…LYTF, IIGY…QAFI, YASA…LCVC, and FLVA…LSWA.

It belongs to the major facilitator superfamily. TCR/Tet family.

Its subcellular location is the membrane. Functionally, MFS-type transporter; part of the diffuse TOX2 gene cluster that mediates the biosynthesis of the HC-toxin, cyclic tetrapeptide of structure cyclo(D-Pro-L-Ala-D-Ala-L-Aeo), where Aeo stands for 2-amino-9,10-epoxi-8-oxodecanoic acid. HC-toxin is a determinant of specificity and virulence in the interaction between the producing fungus and its host, maize. TOXA acts as a HC-toxin efflux pump which contributes to self-protection against HC-toxin and/or the secretion of HC-toxin into the extracellular milieu. In Cochliobolus carbonum (Maize leaf spot fungus), this protein is MFS-type transporter TOXA.